The primary structure comprises 207 residues: Octanoyltransferase (207 aa).

In terms of domain architecture, BPL/LPL catalytic spans 27–203 (ADTEDELWVV…HLETQLTPKA (177 aa)). Substrate contacts are provided by residues 66-73 (RGGQITYH), 133-135 (SLG), and 146-148 (GLA). Cys164 functions as the Acyl-thioester intermediate in the catalytic mechanism.

It belongs to the LipB family.

Its subcellular location is the cytoplasm. The catalysed reaction is octanoyl-[ACP] + L-lysyl-[protein] = N(6)-octanoyl-L-lysyl-[protein] + holo-[ACP] + H(+). It functions in the pathway protein modification; protein lipoylation via endogenous pathway; protein N(6)-(lipoyl)lysine from octanoyl-[acyl-carrier-protein]: step 1/2. In terms of biological role, catalyzes the transfer of endogenously produced octanoic acid from octanoyl-acyl-carrier-protein onto the lipoyl domains of lipoate-dependent enzymes. Lipoyl-ACP can also act as a substrate although octanoyl-ACP is likely to be the physiological substrate. This Neisseria gonorrhoeae (strain ATCC 700825 / FA 1090) protein is Octanoyltransferase.